The primary structure comprises 25 residues: Neuromedin-U-25 (25 aa).

Asn-25 carries the asparagine amide modification.

This sequence belongs to the NmU family.

The protein localises to the secreted. In terms of biological role, stimulates uterine smooth muscle contraction and causes selective vasoconstriction. The chain is Neuromedin-U-25 from Rana temporaria (European common frog).